We begin with the raw amino-acid sequence, 468 residues long: uncharacterized protein (468 aa).

The TRAM domain maps to 3 to 61 (TFANGMTLDVTVDALAPGGKAVCRHEGRVIFVDRGLPGQQLHVRLTTVRKRFAEAECLA). Positions 74, 80, 83, and 162 each coordinate [4Fe-4S] cluster. Residues glutamine 288, tyrosine 317, glutamate 338, and aspartate 389 each coordinate S-adenosyl-L-methionine. Cysteine 416 acts as the Nucleophile in catalysis.

Belongs to the class I-like SAM-binding methyltransferase superfamily. RNA M5U methyltransferase family.

This is an uncharacterized protein from Nitratidesulfovibrio vulgaris (strain ATCC 29579 / DSM 644 / CCUG 34227 / NCIMB 8303 / VKM B-1760 / Hildenborough) (Desulfovibrio vulgaris).